The primary structure comprises 228 residues: Ribosomal RNA small subunit methyltransferase G (228 aa).

Residues G92, F97, 115–117 (EAT), 143–144 (AE), and R156 each bind S-adenosyl-L-methionine.

Belongs to the methyltransferase superfamily. RNA methyltransferase RsmG family.

It is found in the cytoplasm. In terms of biological role, specifically methylates the N7 position of a guanine in 16S rRNA. This chain is Ribosomal RNA small subunit methyltransferase G, found in Thermosynechococcus vestitus (strain NIES-2133 / IAM M-273 / BP-1).